Consider the following 439-residue polypeptide: Homogentisate 1,2-dioxygenase (439 aa).

Residue histidine 289 is the Proton acceptor of the active site. 2 residues coordinate Fe cation: histidine 332 and glutamate 338. The homogentisate site is built by tyrosine 347 and histidine 368. Residue histidine 368 participates in Fe cation binding.

It belongs to the homogentisate dioxygenase family. Hexamer; dimer of trimers. Requires Fe cation as cofactor.

The catalysed reaction is homogentisate + O2 = 4-maleylacetoacetate + H(+). It functions in the pathway amino-acid degradation; L-phenylalanine degradation; acetoacetate and fumarate from L-phenylalanine: step 4/6. Involved in the catabolism of homogentisate (2,5-dihydroxyphenylacetate or 2,5-OH-PhAc), a central intermediate in the degradation of phenylalanine and tyrosine. Catalyzes the oxidative ring cleavage of the aromatic ring of homogentisate to yield maleylacetoacetate. The protein is Homogentisate 1,2-dioxygenase of Xanthomonas euvesicatoria pv. vesicatoria (strain 85-10) (Xanthomonas campestris pv. vesicatoria).